The chain runs to 493 residues: Protein nucleotidyltransferase YdiU (493 aa).

ATP is bound by residues Gly96, Gly98, Arg99, Lys119, Asp131, Gly132, Arg182, and Arg189. Residue Asp258 is the Proton acceptor of the active site. Residues Asn259 and Asp268 each coordinate Mg(2+). An ATP-binding site is contributed by Asp268. Positions 471–493 are disordered; that stretch reads EKYTEFKNPPAPKERVSQTFCGT.

Belongs to the SELO family. Requires Mg(2+) as cofactor. Mn(2+) serves as cofactor.

It carries out the reaction L-seryl-[protein] + ATP = 3-O-(5'-adenylyl)-L-seryl-[protein] + diphosphate. The enzyme catalyses L-threonyl-[protein] + ATP = 3-O-(5'-adenylyl)-L-threonyl-[protein] + diphosphate. The catalysed reaction is L-tyrosyl-[protein] + ATP = O-(5'-adenylyl)-L-tyrosyl-[protein] + diphosphate. It catalyses the reaction L-histidyl-[protein] + UTP = N(tele)-(5'-uridylyl)-L-histidyl-[protein] + diphosphate. It carries out the reaction L-seryl-[protein] + UTP = O-(5'-uridylyl)-L-seryl-[protein] + diphosphate. The enzyme catalyses L-tyrosyl-[protein] + UTP = O-(5'-uridylyl)-L-tyrosyl-[protein] + diphosphate. Its function is as follows. Nucleotidyltransferase involved in the post-translational modification of proteins. It can catalyze the addition of adenosine monophosphate (AMP) or uridine monophosphate (UMP) to a protein, resulting in modifications known as AMPylation and UMPylation. The protein is Protein nucleotidyltransferase YdiU of Nitrosococcus oceani (strain ATCC 19707 / BCRC 17464 / JCM 30415 / NCIMB 11848 / C-107).